The primary structure comprises 168 residues: MSTLLLEAAPNTVLGNIIVVSGAFIILLVLLRLFAWNAITSVFASRAKKISDDIDAAEANNKQAADLVKQRQAELAGSKEEAANIIQVANDTASQNRAKVLATANEEATSLKKRAQEDIEQERKEALNTVKGDVADISVQIAEKLIGQSLDASAQQELIDSYLAKLGE.

A helical membrane pass occupies residues 11 to 31 (NTVLGNIIVVSGAFIILLVLL).

The protein belongs to the ATPase B chain family. As to quaternary structure, F-type ATPases have 2 components, F(1) - the catalytic core - and F(0) - the membrane proton channel. F(1) has five subunits: alpha(3), beta(3), gamma(1), delta(1), epsilon(1). F(0) has three main subunits: a(1), b(2) and c(10-14). The alpha and beta chains form an alternating ring which encloses part of the gamma chain. F(1) is attached to F(0) by a central stalk formed by the gamma and epsilon chains, while a peripheral stalk is formed by the delta and b chains.

It is found in the cell membrane. Functionally, f(1)F(0) ATP synthase produces ATP from ADP in the presence of a proton or sodium gradient. F-type ATPases consist of two structural domains, F(1) containing the extramembraneous catalytic core and F(0) containing the membrane proton channel, linked together by a central stalk and a peripheral stalk. During catalysis, ATP synthesis in the catalytic domain of F(1) is coupled via a rotary mechanism of the central stalk subunits to proton translocation. In terms of biological role, component of the F(0) channel, it forms part of the peripheral stalk, linking F(1) to F(0). This chain is ATP synthase subunit b, found in Lactococcus lactis subsp. lactis (strain IL1403) (Streptococcus lactis).